Consider the following 339-residue polypeptide: tRNA N6-adenosine threonylcarbamoyltransferase (339 aa).

2 residues coordinate Fe cation: His115 and His119. Residues 136-140 (LISGG), Asp168, Glu185, and Ser265 contribute to the substrate site. Position 293 (Asp293) interacts with Fe cation.

It belongs to the KAE1 / TsaD family. Fe(2+) serves as cofactor.

Its subcellular location is the cytoplasm. The enzyme catalyses L-threonylcarbamoyladenylate + adenosine(37) in tRNA = N(6)-L-threonylcarbamoyladenosine(37) in tRNA + AMP + H(+). Functionally, required for the formation of a threonylcarbamoyl group on adenosine at position 37 (t(6)A37) in tRNAs that read codons beginning with adenine. Is probably involved in the transfer of the threonylcarbamoyl moiety of threonylcarbamoyl-AMP (TC-AMP) to the N6 group of A37. The protein is tRNA N6-adenosine threonylcarbamoyltransferase of Pyrobaculum calidifontis (strain DSM 21063 / JCM 11548 / VA1).